Consider the following 276-residue polypeptide: MSFFETLADRIEATDSVVSVGLDPDPNRLPEFLANADLPRWAFNRRIIDATHEHAACYKPNAAFYEDADGWRALEETIAYAHGKDVPVLLDAKRADIGNTTRQYAAALDRADAITVNPYLGRDSLQPFLDREEKGVFVLCRTSNPGGSDLQDLELASGEPLYERVAALADVWNGNDNVGLVVGATAPEELAEVREIVPEIPFLVPGVGAQGGDAEAAVEHGLADRPDAAVDVGLVNSSRGIIFAGEESSRPDDEATYFGAAGDAAKRLKKRLNQYR.

Lys-93 acts as the Proton donor in catalysis.

The protein belongs to the OMP decarboxylase family. Type 2 subfamily.

It catalyses the reaction orotidine 5'-phosphate + H(+) = UMP + CO2. It participates in pyrimidine metabolism; UMP biosynthesis via de novo pathway; UMP from orotate: step 2/2. The protein is Orotidine 5'-phosphate decarboxylase of Halorubrum lacusprofundi (strain ATCC 49239 / DSM 5036 / JCM 8891 / ACAM 34).